Reading from the N-terminus, the 334-residue chain is Nucleoid-associated protein YejK (334 aa).

It belongs to the YejK family.

The protein localises to the cytoplasm. Its subcellular location is the nucleoid. This Escherichia fergusonii (strain ATCC 35469 / DSM 13698 / CCUG 18766 / IAM 14443 / JCM 21226 / LMG 7866 / NBRC 102419 / NCTC 12128 / CDC 0568-73) protein is Nucleoid-associated protein YejK.